The sequence spans 1322 residues: Serine/threonine-protein kinase TIO (1322 aa).

The 251-residue stretch at 6 to 256 (YHVIELVGEG…WPALREHPFV (251 aa)) folds into the Protein kinase domain. Residues 12 to 20 (VGEGSFGRV) and Lys-35 each bind ATP. Residue Asp-127 is the Proton acceptor of the active site. Residues 1000–1322 (CMEDRDLLKA…VIVAKVSGES (323 aa)) form a required for the binding to Kinesin-12 members region. ARM repeat units lie at residues 1056 to 1098 (PRLA…DLSR), 1101 to 1140 (KAFY…NMCR), 1143 to 1182 (GYFY…NAAY), 1183 to 1223 (HNDT…NLVR), 1226 to 1273 (NKLC…LFSL), and 1281 to 1320 (QICR…KVSG).

The protein belongs to the protein kinase superfamily. Ser/Thr protein kinase family. As to quaternary structure, interacts with Kinesin-12 members KIN12A/PAKRP1 and KIN12B/PAKRP1L. Interacts with KIN7B/NACK2. As to expression, ubiquitous.

The protein localises to the cytoplasm. It localises to the cytoskeleton. It is found in the phragmoplast. It catalyses the reaction L-seryl-[protein] + ATP = O-phospho-L-seryl-[protein] + ADP + H(+). The catalysed reaction is L-threonyl-[protein] + ATP = O-phospho-L-threonyl-[protein] + ADP + H(+). Its function is as follows. Plays a role in conventional modes of cytokinesis in meristems and during male gametogenesis but also acts in nonconventional modes of cytokinesis (cellularization) during female gametogenesis. Constitutes a signaling module in association with Kinesin-12 members that is required to support phragmoplast expansion and cell-plate growth in plant cells. This Arabidopsis thaliana (Mouse-ear cress) protein is Serine/threonine-protein kinase TIO (TIO).